A 419-amino-acid chain; its full sequence is Transcription termination factor Rho (419 aa).

One can recognise a Rho RNA-BD domain in the interval 48-123; that stretch reads DIFGDGVLEI…LKVNEVNFDK (76 aa). RNA-binding stretches follow at residues 61–66, 78–80, and 108–110; these read GFGFLR, DIY, and ERY. ATP contacts are provided by residues 169-174, 181-186, and arginine 212; these read GRGQRG and KAGKTM. An RNA-binding 2 region spans residues 284–288; it reads VLTGG.

Belongs to the Rho family. In terms of assembly, homohexamer. The homohexamer assembles into an open ring structure.

Facilitates transcription termination by a mechanism that involves Rho binding to the nascent RNA, activation of Rho's RNA-dependent ATPase activity, and release of the mRNA from the DNA template. In Escherichia coli O157:H7, this protein is Transcription termination factor Rho.